A 172-amino-acid polypeptide reads, in one-letter code: Translationally-controlled tumor protein (172 aa).

Residues 1 to 172 (MIIYRDLISH…FKDGLEMEKC (172 aa)) enclose the TCTP domain. The residue at position 46 (Ser-46) is a Phosphoserine; by PLK1. Ser-53 carries the post-translational modification Phosphoserine. Phosphoserine; by PLK1 is present on Ser-64. A required for reduction of TSC22D1 protein stability region spans residues 70-172 (VDIVMNHHLQ…FKDGLEMEKC (103 aa)).

Belongs to the TCTP family. In terms of assembly, homodimer. Interacts with STEAP3. Interacts with TSC22D1; interaction results in the destabilization of TSC22D1 protein. As to expression, found in several healthy and tumoral cells including erythrocytes, hepatocytes, macrophages, platelets, keratinocytes, erythroleukemia cells, gliomas, melanomas, hepatoblastomas, and lymphomas. It cannot be detected in kidney and renal cell carcinoma (RCC). Expressed in placenta and prostate.

It localises to the cytoplasm. In terms of biological role, involved in calcium binding and microtubule stabilization. Acts as a negative regulator of TSC22D1-mediated apoptosis, via interaction with and destabilization of TSC22D1 protein. This is Translationally-controlled tumor protein (TPT1) from Homo sapiens (Human).